The primary structure comprises 156 residues: Ribonuclease H (156 aa).

The RNase H type-1 domain maps to 7–148; sequence QDKIVMIATD…ADQLASDAAI (142 aa). Mg(2+) is bound by residues Asp-16, Glu-54, Asp-76, and Asp-140.

Belongs to the RNase H family. Monomer. The cofactor is Mg(2+).

It localises to the cytoplasm. It catalyses the reaction Endonucleolytic cleavage to 5'-phosphomonoester.. In terms of biological role, endonuclease that specifically degrades the RNA of RNA-DNA hybrids. The sequence is that of Ribonuclease H (rnhA) from Zymomonas mobilis subsp. mobilis (strain ATCC 31821 / ZM4 / CP4).